The sequence spans 320 residues: Protein PXR1 (320 aa).

The segment covering 1 to 11 (MGLAGPRKRTK) has biased composition (basic residues). The segment at 1–24 (MGLAGPRKRTKISHDPNNTAWSRS) is disordered. Residues 15–24 (DPNNTAWSRS) show a composition bias toward polar residues. Residues 25–79 (TSGYGHKIMSAQGWTPGSFLGASNAAHADHFTAGSAGHIRVILKDDNLGLGAKLR) form the G-patch domain. Residues 152-298 (GEEVQTPQIS…MGRQFTRGRH (147 aa)) form a disordered region. A compositionally biased stretch (basic residues) spans 169 to 182 (KRPKKARKKEKRRA). Composition is skewed to basic and acidic residues over residues 203-214 (RKENKEKKKSSD), 243-256 (KDPE…HDDS), and 269-288 (QESR…EHRP).

This sequence belongs to the PINX1 family.

It is found in the nucleus. Its subcellular location is the nucleolus. Functionally, involved in rRNA-processing at A0, A1 and A2 sites and negatively regulates telomerase. The protein is Protein PXR1 (PXR1) of Ajellomyces capsulatus (strain NAm1 / WU24) (Darling's disease fungus).